Consider the following 307-residue polypeptide: UDP-3-O-acyl-N-acetylglucosamine deacetylase (307 aa).

Zn(2+)-binding residues include histidine 80, histidine 239, and aspartate 243. Histidine 266 serves as the catalytic Proton donor.

This sequence belongs to the LpxC family. It depends on Zn(2+) as a cofactor.

It carries out the reaction a UDP-3-O-[(3R)-3-hydroxyacyl]-N-acetyl-alpha-D-glucosamine + H2O = a UDP-3-O-[(3R)-3-hydroxyacyl]-alpha-D-glucosamine + acetate. It functions in the pathway glycolipid biosynthesis; lipid IV(A) biosynthesis; lipid IV(A) from (3R)-3-hydroxytetradecanoyl-[acyl-carrier-protein] and UDP-N-acetyl-alpha-D-glucosamine: step 2/6. Catalyzes the hydrolysis of UDP-3-O-myristoyl-N-acetylglucosamine to form UDP-3-O-myristoylglucosamine and acetate, the committed step in lipid A biosynthesis. This is UDP-3-O-acyl-N-acetylglucosamine deacetylase from Neisseria meningitidis serogroup A / serotype 4A (strain DSM 15465 / Z2491).